The chain runs to 192 residues: UPF0316 protein SSP0880 (192 aa).

Helical transmembrane passes span Pro8–Met28, Val40–Met60, and Ile66–Ile86.

This sequence belongs to the UPF0316 family.

The protein resides in the cell membrane. The polypeptide is UPF0316 protein SSP0880 (Staphylococcus saprophyticus subsp. saprophyticus (strain ATCC 15305 / DSM 20229 / NCIMB 8711 / NCTC 7292 / S-41)).